The following is a 783-amino-acid chain: Na(+)/H(+) exchanger protein 7 (783 aa).

The chain crosses the membrane as a helical span at residues 1–18 (MWIKLLFFFTTLLVSTSG). Topologically, residues 19 to 108 (LGDDGITALL…WHWDYVKNEL (90 aa)) are extracellular. Residues 109-129 (VLTLFFIVIGLFKLVYHHTFV) form a helical membrane-spanning segment. Residues 130-132 (TRK) are Cytoplasmic-facing. Residues 133 to 153 (ILPESCCLIFIGIAIGFFFVG) form a helical membrane-spanning segment. Topologically, residues 154–159 (DATHAS) are extracellular. Residues 160–180 (IKFLEFKSKVFFFYLLPPIIL) form a helical membrane-spanning segment. Residues 181 to 206 (ESAYSLKDRAFIENIGTILLYAVVGT) lie on the Cytoplasmic side of the membrane. Residues 207–227 (ILNIVLLAAALLILIWVGIMG) traverse the membrane as a helical segment. At 228 to 235 (KYNLSVMD) the chain is on the extracellular side. Residues 236 to 256 (ILTFASLVAAVDPVAVLAVFQ) traverse the membrane as a helical segment. Residues 257-262 (EVGVNK) are Cytoplasmic-facing. A helical transmembrane segment spans residues 263–283 (MLYFMVFGESLFNDAVTIVCY). At 284 to 299 (NLAIEFQTLPDFTWYH) the chain is on the extracellular side. Residues 300 to 320 (GFLGLLSFLCVSIGGLIIGLI) traverse the membrane as a helical segment. The Cytoplasmic portion of the chain corresponds to 321–350 (CGAISSFVTKFTTDVRVVEPVVLFGMAYLA). A helical transmembrane segment spans residues 351 to 371 (YLGSEMFHFSGIIALIACGLF). The Extracellular portion of the chain corresponds to 372–390 (QTHYACCNISYKSFTSVMY). N379 is a glycosylation site (N-linked (GlcNAc...) asparagine). An intramembrane region (helical) is located at residues 391–411 (ITKVCSTLCESLIFIILGVML). Topologically, residues 412-424 (VNEREWFWTDWHP) are extracellular. Residues 425–445 (VFSAVSVVLCVVVRFGVTFFL) traverse the membrane as a helical segment. At 446-464 (TYFVNQFTGGVRHISFQEQ) the chain is on the cytoplasmic side. Residues 465–485 (FIMSYGGLRGAVSFSLVFMIS) traverse the membrane as a helical segment. Topologically, residues 486–492 (ANPDVKN) are extracellular. Residues 493–513 (TMLGATYAVILFTNIIQGSTI) traverse the membrane as a helical segment. The Cytoplasmic portion of the chain corresponds to 514-783 (KLFVKWLNIR…TITESEETSF (270 aa)). Residues 649-702 (DNEDADQRANELIKDVSSIRQLMHNPFEDCYLDRNLTHEEEKEQARLKMKKTRA) adopt a coiled-coil conformation. The interval 745-783 (RPSTSTRVSVEDEEQGLTMKEMEEEHPLMTITESEETSF) is disordered.

The protein belongs to the monovalent cation:proton antiporter 1 (CPA1) transporter (TC 2.A.36) family. As to quaternary structure, interacts (via C-terminus) with cmd-1. As to expression, detected in the posterior cells of the intestine.

It is found in the basolateral cell membrane. In terms of biological role, na+/H+ exchanger which mediates the transient acidification of the coelomic space and plays a role in contraction of posterior body muscles during defecation. Probably by regulating the defecation motor program, required for fatty acid uptake by intestinal cells. The polypeptide is Na(+)/H(+) exchanger protein 7 (Caenorhabditis elegans).